A 367-amino-acid chain; its full sequence is Anhydro-N-acetylmuramic acid kinase (367 aa).

Glycine 11–aspartate 18 serves as a coordination point for ATP.

It belongs to the anhydro-N-acetylmuramic acid kinase family.

The enzyme catalyses 1,6-anhydro-N-acetyl-beta-muramate + ATP + H2O = N-acetyl-D-muramate 6-phosphate + ADP + H(+). It functions in the pathway amino-sugar metabolism; 1,6-anhydro-N-acetylmuramate degradation. It participates in cell wall biogenesis; peptidoglycan recycling. Functionally, catalyzes the specific phosphorylation of 1,6-anhydro-N-acetylmuramic acid (anhMurNAc) with the simultaneous cleavage of the 1,6-anhydro ring, generating MurNAc-6-P. Is required for the utilization of anhMurNAc either imported from the medium or derived from its own cell wall murein, and thus plays a role in cell wall recycling. The sequence is that of Anhydro-N-acetylmuramic acid kinase from Rhodopseudomonas palustris (strain ATCC BAA-98 / CGA009).